The following is a 197-amino-acid chain: Dephospho-CoA kinase (197 aa).

Residues 5–197 (RLGLTGSIGM…IAHIRETADA (193 aa)) enclose the DPCK domain. Residue 13–18 (GMGKST) coordinates ATP.

Belongs to the CoaE family.

It is found in the cytoplasm. It carries out the reaction 3'-dephospho-CoA + ATP = ADP + CoA + H(+). The protein operates within cofactor biosynthesis; coenzyme A biosynthesis; CoA from (R)-pantothenate: step 5/5. Catalyzes the phosphorylation of the 3'-hydroxyl group of dephosphocoenzyme A to form coenzyme A. The sequence is that of Dephospho-CoA kinase from Cereibacter sphaeroides (strain ATCC 17023 / DSM 158 / JCM 6121 / CCUG 31486 / LMG 2827 / NBRC 12203 / NCIMB 8253 / ATH 2.4.1.) (Rhodobacter sphaeroides).